A 406-amino-acid chain; its full sequence is Putative phosphate permease PH0640 (406 aa).

The next 11 helical transmembrane spans lie at 2 to 22, 45 to 65, 83 to 103, 114 to 134, 140 to 160, 182 to 202, 207 to 227, 265 to 285, 288 to 308, 330 to 350, and 385 to 405; these read IPID…AWAI, AVLI…KTVT, VLIY…IIAT, SIIG…IVNW, VVLS…LVFR, FWIG…VLHG, IGIL…TSML, VANA…GLAG, VPVP…GVAT, FTID…GMPI, and FVTV…LLLI.

Belongs to the inorganic phosphate transporter (PiT) (TC 2.A.20) family.

The protein resides in the cell membrane. Its function is as follows. Potential transporter for phosphate. The chain is Putative phosphate permease PH0640 from Pyrococcus horikoshii (strain ATCC 700860 / DSM 12428 / JCM 9974 / NBRC 100139 / OT-3).